We begin with the raw amino-acid sequence, 189 residues long: FUN14 domain-containing protein 2 (189 aa).

Residues 1-80 (METSAPRAGS…GQESGPSAEK (80 aa)) lie on the Cytoplasmic side of the membrane. Residues serine 10 and serine 53 each carry the phosphoserine modification. The helical transmembrane segment at 81–101 (YSVATQLFIGGVTGWCTGFIF) threads the bilayer. Residues 102–107 (QNVGKL) lie on the Mitochondrial intermembrane side of the membrane. A helical membrane pass occupies residues 108-128 (AATAVGGGFFLLQLANHTGYI). Topologically, residues 129 to 164 (KVDWQRVEKDMKKAKEQLKIRKSNQMPTEVRSKAEE) are cytoplasmic. Serine 151 is modified (phosphoserine). A helical transmembrane segment spans residues 165–185 (VVSFVKKNVLVTGGFFGGFLL). At 186 to 189 (GMAS) the chain is on the mitochondrial intermembrane side.

This sequence belongs to the FUN14 family.

It localises to the mitochondrion outer membrane. It is found in the nucleus. Functionally, binds directly and specifically 1,2-Diacyl-sn-glycero-3-phospho-(1'-myo-inositol-3',4',5'-bisphosphate) (PIP3) leading to the recruitment of PIP3 to mitochondria and may play a role in the regulation of the platelet activation via AKT/GSK3B/cGMP signaling pathways. May act as transcription factor that regulates SREBP1 (isoform SREBP-1C) expression in order to modulate triglyceride (TG) homeostasis in hepatocytes. The protein is FUN14 domain-containing protein 2 of Macaca mulatta (Rhesus macaque).